A 137-amino-acid chain; its full sequence is Small ribosomal subunit protein bS16 (137 aa).

Composition is skewed to basic and acidic residues over residues 80–99 and 111–125; these read KSPEEAQKGGMRKGEFKRLQ and VATEEPKAEEAKEAP. Residues 80-137 form a disordered region; the sequence is KSPEEAQKGGMRKGEFKRLQAEQAAKAQKKAVATEEPKAEEAKEAPPAESQAAEGKEE. Low complexity predominate over residues 126–137; sequence PAESQAAEGKEE.

It belongs to the bacterial ribosomal protein bS16 family.

The chain is Small ribosomal subunit protein bS16 from Coxiella burnetii (strain Dugway 5J108-111).